The following is a 243-amino-acid chain: Orotidine 5'-phosphate decarboxylase (243 aa).

Residues D19, K41, 69 to 78, T124, R185, Q194, G214, and R215 contribute to the substrate site; that span reads DLKFFDIPAT. The active-site Proton donor is K71.

Belongs to the OMP decarboxylase family. Type 1 subfamily. As to quaternary structure, homodimer.

The enzyme catalyses orotidine 5'-phosphate + H(+) = UMP + CO2. It participates in pyrimidine metabolism; UMP biosynthesis via de novo pathway; UMP from orotate: step 2/2. In terms of biological role, catalyzes the decarboxylation of orotidine 5'-monophosphate (OMP) to uridine 5'-monophosphate (UMP). The chain is Orotidine 5'-phosphate decarboxylase from Xanthomonas campestris pv. campestris (strain 8004).